The sequence spans 251 residues: Lactose phosphotransferase system repressor (251 aa).

Positions 3–58 constitute an HTH deoR-type domain; sequence KYDRLDEITKLVNKRGSVRTNEIVEDLNVSDMTVRRDLAELEEKGVLTKIHGGARS. Residues 20–39 constitute a DNA-binding region (H-T-H motif); it reads VRTNEIVEDLNVSDMTVRRD.

Functionally, repressor of the lactose catabolism operon. Galactose-6-phosphate is the inducer. This chain is Lactose phosphotransferase system repressor (lacR), found in Staphylococcus epidermidis (strain ATCC 35984 / DSM 28319 / BCRC 17069 / CCUG 31568 / BM 3577 / RP62A).